The chain runs to 217 residues: Non-structural protein NS3 (217 aa).

This sequence belongs to the orbivirus NS3 family.

Its function is as follows. May play a role in the release of virions from infected cells. The sequence is that of Non-structural protein NS3 (Segment-10) from Camelus dromedarius (Dromedary).